The following is a 314-amino-acid chain: Ketimine reductase mu-crystallin (314 aa).

Residue Arg47 coordinates 3,3',5-triiodo-L-thyronine. Positions 82, 92, 119, 144, 146, 147, 168, 169, 170, 173, 205, 206, 226, and 228 each coordinate NADPH. Glu257 lines the 3,3',5-triiodo-L-thyronine pocket. Ser292 is an NADPH binding site.

The protein belongs to the ornithine cyclodeaminase/mu-crystallin family. Homodimer. Binds the thyroid hormone triiodothyronine (T3); T3 binding inhibits enzymatic activity. Expressed in neural tissues, muscle and kidney. Expressed in the inner ear.

The protein localises to the cytoplasm. The catalysed reaction is L-pipecolate + NADP(+) = Delta(1)-piperideine-2-carboxylate + NADPH + H(+). It carries out the reaction L-pipecolate + NAD(+) = Delta(1)-piperideine-2-carboxylate + NADH + H(+). The enzyme catalyses L-proline + NADP(+) = 1-pyrroline-2-carboxylate + NADPH + H(+). It catalyses the reaction L-proline + NAD(+) = 1-pyrroline-2-carboxylate + NADH + H(+). The catalysed reaction is (3R)-1,4-thiomorpholine-3-carboxylate + NAD(+) = 3,4-dehydrothiomorpholine-3-carboxylate + NADH + 2 H(+). It carries out the reaction (3R)-1,4-thiomorpholine-3-carboxylate + NADP(+) = 3,4-dehydrothiomorpholine-3-carboxylate + NADPH + 2 H(+). The enzyme catalyses (S)-cystathionine ketimine + NADH + 2 H(+) = (3R,5S)-2,3,5,6,7-pentahydro-1,4-thiazepine-3,5-dicarboxylate + NAD(+). It catalyses the reaction (S)-cystathionine ketimine + NADPH + 2 H(+) = (3R,5S)-2,3,5,6,7-pentahydro-1,4-thiazepine-3,5-dicarboxylate + NADP(+). The catalysed reaction is (R)-lanthionine ketimine + NADPH + 2 H(+) = (3R,5R)-1,4-thiomorpholine-3,5-dicarboxylate + NADP(+). It carries out the reaction Delta(2)-thiazoline-2-carboxylate + NADPH + 2 H(+) = L-thiazolidine-2-carboxylate + NADP(+). Inhibited by thyroid hormones triiodothyronine (T3) and thyroxine (T4). In terms of biological role, catalyzes the NAD(P)H-dependent reduction of imine double bonds of a number of cyclic ketimine substrates, including sulfur-containing cyclic ketimines. Under physiological conditions, it efficiently catalyzes delta(1)-piperideine-2-carboxylate (P2C) and delta(1)-pyrroline-2-carboxylate (Pyr2C) reduction, suggesting a central role in lysine and glutamate metabolism. Additional substrates are delta(2)-thiazoline-2-carboxylate (T2C), 3,4-dehydrothiomorpholine-3-carboxylate (AECK), and (R)-lanthionine ketimine (LK) that is reduced at very low rate compared to other substrates. Also catalyzes the NAD(P)H-dependent reduction of (S)-cystathionine ketimine (CysK). The chain is Ketimine reductase mu-crystallin from Homo sapiens (Human).